The chain runs to 335 residues: Phosphatidylglycerol--prolipoprotein diacylglyceryl transferase (335 aa).

A run of 3 helical transmembrane segments spans residues 31 to 51, 67 to 87, and 100 to 120; these read IYWY…TYSL, YIFL…LAIG, and LAIQ…FPLI. Residue Arg163 participates in a 1,2-diacyl-sn-glycero-3-phospho-(1'-sn-glycerol) binding. Helical transmembrane passes span 213-233, 235-255, and 277-297; these read PLFL…YFGL, YIKQ…YGVT, and SLLL…APLL.

The protein belongs to the Lgt family.

The protein localises to the cell membrane. It carries out the reaction L-cysteinyl-[prolipoprotein] + a 1,2-diacyl-sn-glycero-3-phospho-(1'-sn-glycerol) = an S-1,2-diacyl-sn-glyceryl-L-cysteinyl-[prolipoprotein] + sn-glycerol 1-phosphate + H(+). It functions in the pathway protein modification; lipoprotein biosynthesis (diacylglyceryl transfer). Catalyzes the transfer of the diacylglyceryl group from phosphatidylglycerol to the sulfhydryl group of the N-terminal cysteine of a prolipoprotein, the first step in the formation of mature lipoproteins. This chain is Phosphatidylglycerol--prolipoprotein diacylglyceryl transferase, found in Ureaplasma parvum serovar 3 (strain ATCC 27815 / 27 / NCTC 11736).